Reading from the N-terminus, the 460-residue chain is Chromosomal replication initiator protein DnaA (460 aa).

The interval 1–91 is domain I, interacts with DnaA modulators; the sequence is MSLINPKVSA…LLWQNEDKSI (91 aa). Residues 91–122 are domain II; it reads ICSIDIQVTEEKNSSSSIISKNKEESVNNLGS. The segment at 123–342 is domain III, AAA+ region; it reads PLDPRFTFDN…GALNKVAHTS (220 aa). Positions 169, 171, 172, and 173 each coordinate ATP. The tract at residues 343–460 is domain IV, binds dsDNA; the sequence is LIGRSMTVES…EINQLRKMFK (118 aa).

Belongs to the DnaA family. As to quaternary structure, oligomerizes as a right-handed, spiral filament on DNA at oriC.

It is found in the cytoplasm. In terms of biological role, plays an essential role in the initiation and regulation of chromosomal replication. ATP-DnaA binds to the origin of replication (oriC) to initiate formation of the DNA replication initiation complex once per cell cycle. Binds the DnaA box (a 9 base pair repeat at the origin) and separates the double-stranded (ds)DNA. Forms a right-handed helical filament on oriC DNA; dsDNA binds to the exterior of the filament while single-stranded (ss)DNA is stabiized in the filament's interior. The ATP-DnaA-oriC complex binds and stabilizes one strand of the AT-rich DNA unwinding element (DUE), permitting loading of DNA polymerase. After initiation quickly degrades to an ADP-DnaA complex that is not apt for DNA replication. Binds acidic phospholipids. The chain is Chromosomal replication initiator protein DnaA from Wolbachia sp. subsp. Brugia malayi (strain TRS).